A 613-amino-acid chain; its full sequence is Oxidoreductase GME11365 (613 aa).

3 Plastocyanin-like domains span residues 72–188, 198–331, and 431–571; these read ISEA…HGPS, PLLI…WIHG, and VDWR…EQPS.

This sequence belongs to the multicopper oxidase family.

It functions in the pathway secondary metabolite biosynthesis. In terms of biological role, oxidoreductase; part of the gene cluster that mediates the biosynthesis of dibenzodioxocinones such as pestalotiollide B, a novel class of inhibitors against cholesterol ester transfer protein (CEPT). The biosynthesis initiates from condensation of acetate and malonate units catalyzed by the non-reducing PKS pks8/GME11356. Pks8/GME11356 lacks a thioesterase (TE) domain, which is important to the cyclizing of the third ring of atrochrysone carboxylic acid, and the esterase GME11355 might play the role of TE and catalyzes the cyclization reaction of the C ring. The lactamase-like protein GME11357 (or other beta-lactamases in Pestalotiopsis microspora) probably hydrolyzes the thioester bond between the ACP of pks8/GME11356 and the intermediate to release atrochrysone carboxylic acid, which is spontaneously dehydrates to form endocrocin anthrone. Endocrocin anthrone is further converted to emodin via the endocrocin intermediate. Emodin is then oxidized by several enzymes such as the Baeyer-Villiger oxidase GME11358, the oxidoreductase GME11367, the short chain dehydrogenase/reductase GME11373, as well as by other oxidoreductases from the cluster, to modify the A and C rings and open the B ring, and finally yield monodictyphenone. The prenyltransferase GME11375 may catalyze the addition reaction between the C5 side chains and the carbon bone of dibenzodioxocinones. The remaining biochemical reactions to the final product dibenzodioxocinones should be methylation catalyzed by methyltransferase GME11366 and reduction and lactonization reaction catalyzed by a series of oxidordeuctases. The chain is Oxidoreductase GME11365 from Pestalotiopsis microspora.